The primary structure comprises 1479 residues: Type VII secretion system protein EssC (1479 aa).

The Cytoplasmic portion of the chain corresponds to Met-1 to Asn-229. The helical transmembrane segment at Thr-230–Val-252 threads the bilayer. Residues Arg-253–Gly-256 lie on the Extracellular side of the membrane. A helical transmembrane segment spans residues Ile-257–Ser-279. The Cytoplasmic portion of the chain corresponds to Glu-280–Lys-1479. FtsK domains follow at residues Asp-652 to Asn-846 and Gln-997 to Ser-1183. Residues Gly-672–Ser-679 and Gly-1014–Thr-1021 contribute to the ATP site.

Belongs to the EssC family. In terms of assembly, homooligomer. Interacts with EsaE.

Its subcellular location is the cell membrane. Component of the type VII secretion system (Ess). Required for the secretion of substrates including EsxA and EsxB. However, unable to support secretion of the substrate protein EsxC. This chain is Type VII secretion system protein EssC, found in Staphylococcus aureus (strain Mu50 / ATCC 700699).